The following is a 149-amino-acid chain: D-aminoacyl-tRNA deacylase (149 aa).

The Gly-cisPro motif, important for rejection of L-amino acids motif lies at 137–138; it reads GP.

The protein belongs to the DTD family. As to quaternary structure, homodimer.

The protein resides in the cytoplasm. The enzyme catalyses glycyl-tRNA(Ala) + H2O = tRNA(Ala) + glycine + H(+). The catalysed reaction is a D-aminoacyl-tRNA + H2O = a tRNA + a D-alpha-amino acid + H(+). Functionally, an aminoacyl-tRNA editing enzyme that deacylates mischarged D-aminoacyl-tRNAs. Also deacylates mischarged glycyl-tRNA(Ala), protecting cells against glycine mischarging by AlaRS. Acts via tRNA-based rather than protein-based catalysis; rejects L-amino acids rather than detecting D-amino acids in the active site. By recycling D-aminoacyl-tRNA to D-amino acids and free tRNA molecules, this enzyme counteracts the toxicity associated with the formation of D-aminoacyl-tRNA entities in vivo and helps enforce protein L-homochirality. In Clostridium botulinum (strain 657 / Type Ba4), this protein is D-aminoacyl-tRNA deacylase.